Here is a 276-residue protein sequence, read N- to C-terminus: Type 2 phosphatidylinositol 4,5-bisphosphate 4-phosphatase (276 aa).

The segment covering 1 to 10 has biased composition (basic and acidic residues); that stretch reads MAADGIDERS. Residues 1–27 form a disordered region; the sequence is MAADGIDERSPLISPSSGNVTPTAPPY. Positions 13 to 27 are enriched in polar residues; that stretch reads ISPSSGNVTPTAPPY. C106 is an active-site residue. The CX5R motif motif lies at 106–112; it reads CKDISRR. 2 helical membrane-spanning segments follow: residues 211-231 and 246-266; these read CCTY…LTVG and WAVA…WGAI.

The protein localises to the late endosome membrane. It localises to the lysosome membrane. It carries out the reaction a 1,2-diacyl-sn-glycero-3-phospho-(1D-myo-inositol-4,5-bisphosphate) + H2O = a 1,2-diacyl-sn-glycero-3-phospho-(1D-myo-inositol-5-phosphate) + phosphate. In terms of biological role, catalyzes the hydrolysis of phosphatidylinositol-4,5-bisphosphate (PtdIns-4,5-P2) to phosphatidylinositol-4-phosphate (PtdIns-4-P). The sequence is that of Type 2 phosphatidylinositol 4,5-bisphosphate 4-phosphatase (pip4p2) from Xenopus tropicalis (Western clawed frog).